The chain runs to 408 residues: MKCLCFIVLLAIVIAQSYVGVEAAPSDGFVSRNGVQFILNGKPFYANGFNAYWLAYEATDPATRFKITNVFQNATSLGLTIARTWGFRNGAIYRALQTAPGSYDEQTFQGLDFGIAEAKRVGIKLIIPLVNNWDDYGGKKQYVDWARSKGEMVSSNDDFYRNPVIKEFYKNHVKTMLNRVNTFTKVAYKDEPASMAWQLMNEPRCGVDRSGKTLMAWINEMALFVKSVDPNHLLSTGHEGFYGDSSPERKNSLNPVSANTVGADFIANHNIDAIDFASMHCGSDLWFQRLDQNSRLAFIKRWLEGHIEDAQNNLKKPVILAEFGLGSDTPRYTLANRDDVFTTTYDIIYISTQKGGSAAGALFWEVISEGVSNFAGPSSIILSDKSSTVNIISEQRRKMGLLGGTKGK.

An N-terminal signal peptide occupies residues 1–23; sequence MKCLCFIVLLAIVIAQSYVGVEA. N73 carries an N-linked (GlcNAc...) asparagine glycan. W85 and N201 together coordinate substrate. The active-site Proton donor is E202. The active-site Nucleophile is E322. Substrate is bound at residue W364.

Belongs to the glycosyl hydrolase 5 (cellulase A) family.

The protein resides in the secreted. The catalysed reaction is Random hydrolysis of (1-&gt;4)-beta-D-mannosidic linkages in mannans, galactomannans and glucomannans.. The chain is Putative mannan endo-1,4-beta-mannosidase P (MANP) from Arabidopsis thaliana (Mouse-ear cress).